The sequence spans 154 residues: Myoglobin (154 aa).

The Globin domain occupies 2–148 (GLSDQEWQHV…FRNDMASKYK (147 aa)). H65 contributes to the nitrite binding site. Residue H65 participates in O2 binding. H94 is a binding site for heme b.

It belongs to the globin family. As to quaternary structure, monomeric.

The protein resides in the cytoplasm. Its subcellular location is the sarcoplasm. It catalyses the reaction Fe(III)-heme b-[protein] + nitric oxide + H2O = Fe(II)-heme b-[protein] + nitrite + 2 H(+). The catalysed reaction is H2O2 + AH2 = A + 2 H2O. Its function is as follows. Monomeric heme protein which primary function is to store oxygen and facilitate its diffusion within muscle tissues. Reversibly binds oxygen through a pentacoordinated heme iron and enables its timely and efficient release as needed during periods of heightened demand. Depending on the oxidative conditions of tissues and cells, and in addition to its ability to bind oxygen, it also has a nitrite reductase activity whereby it regulates the production of bioactive nitric oxide. Under stress conditions, like hypoxia and anoxia, it also protects cells against reactive oxygen species thanks to its pseudoperoxidase activity. The sequence is that of Myoglobin (MB) from Uria lomvia (Thick-billed murre).